The chain runs to 255 residues: Receptor expression-enhancing protein 3 (255 aa).

Helical transmembrane passes span 1-21, 35-55, and 59-79; these read MVSWMISRAVVLVFGMLYPAY, YVRWMMYWIVFALYTVIETVA, and VAWFPLYYELKIAFVIWLLSP. The interval 158-242 is disordered; that stretch reads TIQGDEPVGQ…KGRKEVRYGS (85 aa). The residue at position 201 (Thr-201) is a Phosphothreonine. Ser-210 carries the phosphoserine modification. Positions 222 to 231 are enriched in polar residues; the sequence is RSQSMKSVKT.

This sequence belongs to the DP1 family. As to expression, expressed in circumvallate papillae.

Its subcellular location is the endoplasmic reticulum membrane. Functionally, microtubule-binding protein required to ensure proper cell division and nuclear envelope reassembly by sequestering the endoplasmic reticulum away from chromosomes during mitosis. Probably acts by clearing the endoplasmic reticulum membrane from metaphase chromosomes. The protein is Receptor expression-enhancing protein 3 (REEP3) of Homo sapiens (Human).